Here is a 736-residue protein sequence, read N- to C-terminus: DNA ligase (736 aa).

NAD(+) contacts are provided by residues 41-45 (DQEYD), 91-92 (SL), and Glu-125. The N6-AMP-lysine intermediate role is filled by Lys-127. An NAD(+)-binding site is contributed by Arg-148. The disordered stretch occupies residues 170 to 205 (ELTPLPLAGGAGGGPLDDSGSAPTPDPSRRREGKWN). The NAD(+) site is built by Glu-215, Lys-347, and Lys-371. Zn(2+)-binding residues include Cys-463, Cys-466, Cys-481, and Cys-487. A BRCT domain is found at 656-736 (TLDSPVAGKT…GWAEIVAAAG (81 aa)).

It belongs to the NAD-dependent DNA ligase family. LigA subfamily. It depends on Mg(2+) as a cofactor. Requires Mn(2+) as cofactor.

The enzyme catalyses NAD(+) + (deoxyribonucleotide)n-3'-hydroxyl + 5'-phospho-(deoxyribonucleotide)m = (deoxyribonucleotide)n+m + AMP + beta-nicotinamide D-nucleotide.. Its function is as follows. DNA ligase that catalyzes the formation of phosphodiester linkages between 5'-phosphoryl and 3'-hydroxyl groups in double-stranded DNA using NAD as a coenzyme and as the energy source for the reaction. It is essential for DNA replication and repair of damaged DNA. This Erythrobacter litoralis (strain HTCC2594) protein is DNA ligase.